Here is a 121-residue protein sequence, read N- to C-terminus: Putative iron-sulfur cluster insertion protein ErpA (121 aa).

Cys49, Cys113, and Cys115 together coordinate iron-sulfur cluster.

This sequence belongs to the HesB/IscA family. In terms of assembly, homodimer. Iron-sulfur cluster is required as a cofactor.

In terms of biological role, required for insertion of 4Fe-4S clusters. The polypeptide is Putative iron-sulfur cluster insertion protein ErpA (Methylibium petroleiphilum (strain ATCC BAA-1232 / LMG 22953 / PM1)).